The following is a 442-amino-acid chain: D-serine dehydratase 2 (442 aa).

The residue at position 118 (Lys118) is an N6-(pyridoxal phosphate)lysine.

It belongs to the serine/threonine dehydratase family. DsdA subfamily. Monomer. The cofactor is pyridoxal 5'-phosphate.

The enzyme catalyses D-serine = pyruvate + NH4(+). The chain is D-serine dehydratase 2 from Escherichia coli O6:K15:H31 (strain 536 / UPEC).